Reading from the N-terminus, the 280-residue chain is Putative pyruvate, phosphate dikinase regulatory protein 1 (280 aa).

152–159 is an ADP binding site; it reads GVSRTSKT.

It belongs to the pyruvate, phosphate/water dikinase regulatory protein family. PDRP subfamily.

The catalysed reaction is N(tele)-phospho-L-histidyl/L-threonyl-[pyruvate, phosphate dikinase] + ADP = N(tele)-phospho-L-histidyl/O-phospho-L-threonyl-[pyruvate, phosphate dikinase] + AMP + H(+). It carries out the reaction N(tele)-phospho-L-histidyl/O-phospho-L-threonyl-[pyruvate, phosphate dikinase] + phosphate + H(+) = N(tele)-phospho-L-histidyl/L-threonyl-[pyruvate, phosphate dikinase] + diphosphate. Its function is as follows. Bifunctional serine/threonine kinase and phosphorylase involved in the regulation of the pyruvate, phosphate dikinase (PPDK) by catalyzing its phosphorylation/dephosphorylation. The protein is Putative pyruvate, phosphate dikinase regulatory protein 1 of Latilactobacillus sakei subsp. sakei (strain 23K) (Lactobacillus sakei subsp. sakei).